The chain runs to 128 residues: Glycine cleavage system H protein (128 aa).

The region spanning 24–106 (VATVGITAFA…YNNGWLLKIK (83 aa)) is the Lipoyl-binding domain. Residue lysine 65 is modified to N6-lipoyllysine.

It belongs to the GcvH family. As to quaternary structure, the glycine cleavage system is composed of four proteins: P, T, L and H. (R)-lipoate serves as cofactor.

Its function is as follows. The glycine cleavage system catalyzes the degradation of glycine. The H protein shuttles the methylamine group of glycine from the P protein to the T protein. The polypeptide is Glycine cleavage system H protein (Acaryochloris marina (strain MBIC 11017)).